Consider the following 425-residue polypeptide: Proline--tRNA ligase (425 aa).

Belongs to the class-II aminoacyl-tRNA synthetase family. ProS type 2 subfamily. Homodimer.

The protein resides in the cytoplasm. It catalyses the reaction tRNA(Pro) + L-proline + ATP = L-prolyl-tRNA(Pro) + AMP + diphosphate. Catalyzes the attachment of proline to tRNA(Pro) in a two-step reaction: proline is first activated by ATP to form Pro-AMP and then transferred to the acceptor end of tRNA(Pro). In Anaplasma marginale (strain St. Maries), this protein is Proline--tRNA ligase.